The sequence spans 216 residues: MSCTIEKVLADAKALVERLREHDGAAEVLIEQTTTLNKRVEAMKQYQEEVQELNEIARHRPRSTLVLGIQQENRQIRQLQQENKELRTSLKEHQSALELIMSKYREQMFRLLMASKKDDPGIIMKLKEQHSKELQAHIEKITEMTAVMKRAIEIDEQQGNQEHDRIVKLEQENKWLRKTLQITRASFLNLHKEDAAESSSHSASSVPNTDLSLRKS.

Coiled coils occupy residues 33-102 (TTTL…LIMS) and 131-185 (SKEL…ITRA). The interval 193 to 216 (EDAAESSSHSASSVPNTDLSLRKS) is disordered. A compositionally biased stretch (polar residues) spans 206–216 (VPNTDLSLRKS).

This sequence belongs to the SIKE family.

It localises to the cytoplasm. The sequence is that of FGFR1 oncogene partner 2 homolog (fgfr1op2) from Xenopus tropicalis (Western clawed frog).